The chain runs to 319 residues: Ornithine carbamoyltransferase (319 aa).

Carbamoyl phosphate contacts are provided by residues 55–58 (STRT), glutamine 82, arginine 106, and 133–136 (HPCQ). Residues asparagine 171, aspartate 234, and 238 to 239 (SM) each bind L-ornithine. Residues 274 to 275 (CL) and arginine 302 contribute to the carbamoyl phosphate site.

This sequence belongs to the aspartate/ornithine carbamoyltransferase superfamily. OTCase family.

The protein localises to the cytoplasm. The catalysed reaction is carbamoyl phosphate + L-ornithine = L-citrulline + phosphate + H(+). The protein operates within amino-acid biosynthesis; L-arginine biosynthesis; L-arginine from L-ornithine and carbamoyl phosphate: step 1/3. Reversibly catalyzes the transfer of the carbamoyl group from carbamoyl phosphate (CP) to the N(epsilon) atom of ornithine (ORN) to produce L-citrulline. This is Ornithine carbamoyltransferase from Corynebacterium diphtheriae (strain ATCC 700971 / NCTC 13129 / Biotype gravis).